We begin with the raw amino-acid sequence, 288 residues long: Polyamine aminopropyltransferase (288 aa).

The PABS domain occupies 9 to 238; it reads ETLHDQFGQY…GIMTFAWATD (230 aa). Gln-33 serves as a coordination point for S-methyl-5'-thioadenosine. Spermidine-binding residues include His-64 and Asp-88. S-methyl-5'-thioadenosine-binding positions include Glu-108 and 140 to 141; that span reads DG. Residue Asp-158 is the Proton acceptor of the active site. Residue 158–161 coordinates spermidine; the sequence is DCTD. Pro-165 lines the S-methyl-5'-thioadenosine pocket.

This sequence belongs to the spermidine/spermine synthase family. Homodimer or homotetramer.

The protein resides in the cytoplasm. The enzyme catalyses S-adenosyl 3-(methylsulfanyl)propylamine + putrescine = S-methyl-5'-thioadenosine + spermidine + H(+). Its pathway is amine and polyamine biosynthesis; spermidine biosynthesis; spermidine from putrescine: step 1/1. Functionally, catalyzes the irreversible transfer of a propylamine group from the amino donor S-adenosylmethioninamine (decarboxy-AdoMet) to putrescine (1,4-diaminobutane) to yield spermidine. This Shigella boydii serotype 18 (strain CDC 3083-94 / BS512) protein is Polyamine aminopropyltransferase.